The following is a 231-amino-acid chain: Somatolactin (231 aa).

Residues 1–24 (MNMMTVKQQGVWAALLWPYLLTAS) form the signal peptide. 3 disulfides stabilise this stretch: Cys29–Cys39, Cys89–Cys205, and Cys222–Cys230. Asn145 carries an N-linked (GlcNAc...) asparagine glycan.

Belongs to the somatotropin/prolactin family. As to expression, pituitary gland.

It localises to the secreted. The polypeptide is Somatolactin (Paralichthys olivaceus (Bastard halibut)).